Here is a 313-residue protein sequence, read N- to C-terminus: tRNA-cytidine(32) 2-sulfurtransferase (313 aa).

Residues S50 to S55 carry the PP-loop motif motif. Residues C125, C128, and C216 each contribute to the [4Fe-4S] cluster site.

Belongs to the TtcA family. In terms of assembly, homodimer. It depends on Mg(2+) as a cofactor. [4Fe-4S] cluster is required as a cofactor.

The protein resides in the cytoplasm. The catalysed reaction is cytidine(32) in tRNA + S-sulfanyl-L-cysteinyl-[cysteine desulfurase] + AH2 + ATP = 2-thiocytidine(32) in tRNA + L-cysteinyl-[cysteine desulfurase] + A + AMP + diphosphate + H(+). It functions in the pathway tRNA modification. Catalyzes the ATP-dependent 2-thiolation of cytidine in position 32 of tRNA, to form 2-thiocytidine (s(2)C32). The sulfur atoms are provided by the cysteine/cysteine desulfurase (IscS) system. The polypeptide is tRNA-cytidine(32) 2-sulfurtransferase (Haemophilus influenzae (strain ATCC 51907 / DSM 11121 / KW20 / Rd)).